The chain runs to 688 residues: Potassium-transporting ATPase ATP-binding subunit (688 aa).

The next 4 membrane-spanning stretches (helical) occupy residues 34 to 54, 62 to 82, 219 to 239, and 260 to 280; these read PVMFVVYLGSWLTTLIWLDIL, AMFTGSIALWLWFTVLFANMA, VALTILLVALTIVFLLATATL, and VLVALLVCLIPTTIGGLLSAI. The active-site 4-aspartylphosphate intermediate is Asp-313. Residues Asp-350, Glu-354, 383–390, and Lys-401 contribute to the ATP site; that span reads FSAQTRMS. Mg(2+) contacts are provided by Asp-524 and Asp-528. 3 helical membrane-spanning segments follow: residues 594–614, 622–642, and 662–682; these read FAIIPAAFAATYPQLNALNIM, AILSAVIFNALVIVFLIPLAL, and IYGLGGLLVPFVGIKLIDLLL.

The protein belongs to the cation transport ATPase (P-type) (TC 3.A.3) family. Type IA subfamily. As to quaternary structure, the system is composed of three essential subunits: KdpA, KdpB and KdpC.

It is found in the cell inner membrane. It carries out the reaction K(+)(out) + ATP + H2O = K(+)(in) + ADP + phosphate + H(+). Part of the high-affinity ATP-driven potassium transport (or Kdp) system, which catalyzes the hydrolysis of ATP coupled with the electrogenic transport of potassium into the cytoplasm. This subunit is responsible for energy coupling to the transport system and for the release of the potassium ions to the cytoplasm. This is Potassium-transporting ATPase ATP-binding subunit from Yersinia pestis bv. Antiqua (strain Antiqua).